The sequence spans 137 residues: Photosystem II reaction center W protein, chloroplastic (137 aa).

The transit peptide at 1 to 64 directs the protein to the chloroplast; sequence MATITASSSA…ETTTTTNKSM (64 aa). The transit peptide at 65–83 directs the protein to the thylakoid; the sequence is GASLLAAAAAATISNPAMA. Residues 84–103 lie on the Lumenal, thylakoid side of the membrane; that stretch reads LVDERMSTEGTGLPFGLSNN. Residues 104-123 traverse the membrane as a helical segment; the sequence is LLGWILFGVFGLIWALYFVY. Topologically, residues 124 to 137 are stromal; that stretch reads ASGLEEDEESGLSL.

In terms of assembly, part of the photosystem II complex. PSII is composed of 1 copy each of membrane proteins PsbA, PsbB, PsbC, PsbD, numerous small proteins, at least 3 peripheral proteins of the oxygen-evolving complex and a large number of cofactors. It forms dimeric complexes.

Its subcellular location is the plastid. It localises to the chloroplast thylakoid membrane. Functionally, stabilizes dimeric photosystem II (PSII). In its absence no dimeric PSII accumulates and there is a reduction of monomeric PSII. The sequence is that of Photosystem II reaction center W protein, chloroplastic from Spinacia oleracea (Spinach).